The primary structure comprises 286 residues: ATP synthase gamma chain (286 aa).

The protein belongs to the ATPase gamma chain family. In terms of assembly, F-type ATPases have 2 components, CF(1) - the catalytic core - and CF(0) - the membrane proton channel. CF(1) has five subunits: alpha(3), beta(3), gamma(1), delta(1), epsilon(1). CF(0) has three main subunits: a, b and c.

The protein resides in the cell inner membrane. Produces ATP from ADP in the presence of a proton gradient across the membrane. The gamma chain is believed to be important in regulating ATPase activity and the flow of protons through the CF(0) complex. The protein is ATP synthase gamma chain of Pseudomonas fluorescens (strain Pf0-1).